The sequence spans 306 residues: Putative secretory carrier-associated membrane protein 1 (306 aa).

The interval 1–60 (MAGRYDSNPFEEDDVNPFSEQARGKAGGQPSYGGGAFYMPNPRNVPSMSSNSRLSPLPPE) is disordered. Residues 1 to 141 (MAGRYDSNPF…EIPSHLQRMQ (141 aa)) lie on the Cytoplasmic side of the membrane. Positions 25–36 (KAGGQPSYGGGA) are enriched in gly residues. Polar residues predominate over residues 44 to 54 (NVPSMSSNSRL). Residues 72-109 (LDSSKDLKNREKELQAREAELNKREKELKRREEAAARA) are a coiled coil. The next 4 membrane-spanning stretches (helical) occupy residues 142-162 (YVAF…VIAV), 174-194 (IWLL…VLWY), 209-229 (FGLF…SAVA), and 257-277 (IFYF…IWVI). Residues 278–306 (QQVYMYFRGSGKAAEMKRDATRGAMRAAF) lie on the Cytoplasmic side of the membrane.

The protein belongs to the SCAMP family.

Its subcellular location is the cell membrane. The protein localises to the cytoplasmic vesicle. It localises to the secretory vesicle membrane. In terms of biological role, probably involved in membrane trafficking. The sequence is that of Putative secretory carrier-associated membrane protein 1 (SCAMP1) from Oryza sativa subsp. indica (Rice).